The primary structure comprises 217 residues: Pyrophosphatase PpaX (217 aa).

Asp-11 serves as the catalytic Nucleophile.

It belongs to the HAD-like hydrolase superfamily. PpaX family. Mg(2+) serves as cofactor.

The catalysed reaction is diphosphate + H2O = 2 phosphate + H(+). Hydrolyzes pyrophosphate formed during P-Ser-HPr dephosphorylation by HPrK/P. Might play a role in controlling the intracellular pyrophosphate pool. This is Pyrophosphatase PpaX from Listeria innocua serovar 6a (strain ATCC BAA-680 / CLIP 11262).